The sequence spans 452 residues: cAMP-dependent protein kinase regulatory subunit (452 aa).

Residues 28–212 (QFCANYFNSK…ELSKTLGSNF (185 aa)) form a dimerization and phosphorylation region. The interval 74–163 (IMTTNKRQPS…APPVPKSKIP (90 aa)) is disordered. Residues 75–84 (MTTNKRQPSF) show a composition bias toward polar residues. A compositionally biased stretch (basic and acidic residues) spans 95-106 (SIDHHHDDDPKE). S173 carries the phosphoserine modification. A nucleoside 3',5'-cyclic phosphate is bound by residues 213–330 (LFRQ…FLKD) and 333–451 (VLSS…QGSS). Residues E278, R287, E399, and R408 each coordinate 3',5'-cyclic AMP.

The protein belongs to the cAMP-dependent kinase regulatory chain family. As to quaternary structure, tetramer, composed of 2 regulatory (R) and 2 catalytic (C) subunits. In the presence of cAMP it dissociates into 2 active monomeric C subunits and an R dimer.

This Debaryomyces hansenii (strain ATCC 36239 / CBS 767 / BCRC 21394 / JCM 1990 / NBRC 0083 / IGC 2968) (Yeast) protein is cAMP-dependent protein kinase regulatory subunit (PKAR).